The sequence spans 42 residues: ECNIGDICVVHGDCSECKCSDGRAAKCDREHGEPPHCSCSHR.

Contains four disulfide bonds.

Functionally, inhibitor of shell growth. In Haliotis laevigata (Smooth Australian abalone), this protein is Perlinhibin-related protein.